The chain runs to 576 residues: RING finger and SPRY domain-containing protein 1 (576 aa).

A signal peptide spans 1 to 16; sequence MIVLGWAVFLASRSLG. Residue Ser50 is modified to Phosphoserine. The disordered stretch occupies residues 50-99; the sequence is SGTDDSVDTQQQQAENSAVPTADTRSQPRDPVRPPRRGRGPHEPRRKKQN. A compositionally biased stretch (polar residues) spans 57–68; the sequence is DTQQQQAENSAV. The span at 83–97 shows a compositional bias: basic residues; sequence PPRRGRGPHEPRRKK. Positions 300–483 constitute a B30.2/SPRY domain; that stretch reads LFLKEGRQLT…CEFNFGAKPF (184 aa). Asn314 carries N-linked (GlcNAc...) asparagine glycosylation. The RING-type zinc-finger motif lies at 527-562; sequence CSLCCDEVADTQLKPCGHSDLCMDCALQLETCPLCR.

It localises to the secreted. This is RING finger and SPRY domain-containing protein 1 (RSPRY1) from Macaca fascicularis (Crab-eating macaque).